A 125-amino-acid polypeptide reads, in one-letter code: Small ribosomal subunit protein uS12 (125 aa).

3-methylthioaspartic acid is present on aspartate 89.

This sequence belongs to the universal ribosomal protein uS12 family. Part of the 30S ribosomal subunit. Contacts proteins S8 and S17. May interact with IF1 in the 30S initiation complex.

In terms of biological role, with S4 and S5 plays an important role in translational accuracy. Functionally, interacts with and stabilizes bases of the 16S rRNA that are involved in tRNA selection in the A site and with the mRNA backbone. Located at the interface of the 30S and 50S subunits, it traverses the body of the 30S subunit contacting proteins on the other side and probably holding the rRNA structure together. The combined cluster of proteins S8, S12 and S17 appears to hold together the shoulder and platform of the 30S subunit. The polypeptide is Small ribosomal subunit protein uS12 (Clostridium acetobutylicum (strain ATCC 824 / DSM 792 / JCM 1419 / IAM 19013 / LMG 5710 / NBRC 13948 / NRRL B-527 / VKM B-1787 / 2291 / W)).